We begin with the raw amino-acid sequence, 152 residues long: Regulator of G-protein signaling 21 (152 aa).

Residues 21–137 (NMDTLLANQA…LKSEIYKKLV (117 aa)) enclose the RGS domain.

In terms of tissue distribution, expressed ubiquitously.

In terms of biological role, inhibits signal transduction by increasing the GTPase activity of G protein alpha subunits thereby driving them into their inactive GDP-bound form. The sequence is that of Regulator of G-protein signaling 21 (RGS21) from Homo sapiens (Human).